Reading from the N-terminus, the 265-residue chain is 4-hydroxy-tetrahydrodipicolinate reductase (265 aa).

NAD(+) contacts are provided by residues 7–12 and aspartate 33; that span reads GASGRM. Arginine 34 is an NADP(+) binding site. Residues 96 to 98 and 120 to 123 each bind NAD(+); these read GTT and AANM. Histidine 153 serves as the catalytic Proton donor/acceptor. Residue histidine 154 coordinates (S)-2,3,4,5-tetrahydrodipicolinate. Lysine 157 functions as the Proton donor in the catalytic mechanism. (S)-2,3,4,5-tetrahydrodipicolinate is bound at residue 163 to 164; sequence GT.

Belongs to the DapB family.

Its subcellular location is the cytoplasm. It carries out the reaction (S)-2,3,4,5-tetrahydrodipicolinate + NAD(+) + H2O = (2S,4S)-4-hydroxy-2,3,4,5-tetrahydrodipicolinate + NADH + H(+). The enzyme catalyses (S)-2,3,4,5-tetrahydrodipicolinate + NADP(+) + H2O = (2S,4S)-4-hydroxy-2,3,4,5-tetrahydrodipicolinate + NADPH + H(+). Its pathway is amino-acid biosynthesis; L-lysine biosynthesis via DAP pathway; (S)-tetrahydrodipicolinate from L-aspartate: step 4/4. Catalyzes the conversion of 4-hydroxy-tetrahydrodipicolinate (HTPA) to tetrahydrodipicolinate. In Burkholderia ambifaria (strain MC40-6), this protein is 4-hydroxy-tetrahydrodipicolinate reductase.